Consider the following 175-residue polypeptide: Adenine phosphoribosyltransferase (175 aa).

It belongs to the purine/pyrimidine phosphoribosyltransferase family. In terms of assembly, homodimer.

The protein localises to the cytoplasm. The catalysed reaction is AMP + diphosphate = 5-phospho-alpha-D-ribose 1-diphosphate + adenine. It functions in the pathway purine metabolism; AMP biosynthesis via salvage pathway; AMP from adenine: step 1/1. Its function is as follows. Catalyzes a salvage reaction resulting in the formation of AMP, that is energically less costly than de novo synthesis. This is Adenine phosphoribosyltransferase from Parvibaculum lavamentivorans (strain DS-1 / DSM 13023 / NCIMB 13966).